We begin with the raw amino-acid sequence, 357 residues long: 4-hydroxy-2-oxovalerate aldolase (357 aa).

The tract at residues Met1–Thr21 is disordered. One can recognise a Pyruvate carboxyltransferase domain in the interval Val15 to Leu265. Arg23 to Asp24 contacts substrate. Residue Asp24 coordinates Mn(2+). His27 functions as the Proton acceptor in the catalytic mechanism. Substrate-binding residues include Ser177 and His204. Residues His204 and His206 each contribute to the Mn(2+) site.

Belongs to the 4-hydroxy-2-oxovalerate aldolase family.

The catalysed reaction is (S)-4-hydroxy-2-oxopentanoate = acetaldehyde + pyruvate. Its function is as follows. Involved in the biosynthesis of the peptidyl nucleoside antibiotic nikkomycin. This chain is 4-hydroxy-2-oxovalerate aldolase, found in Streptomyces tendae.